Consider the following 490-residue polypeptide: Betaine aldehyde dehydrogenase (490 aa).

NAD(+)-binding positions include Lys174, Glu177, and 227 to 232; that span reads GGIETG. Catalysis depends on residues Glu249 and Cys283. Residue Glu384 participates in NAD(+) binding.

Belongs to the aldehyde dehydrogenase family. As to quaternary structure, homodimer.

The enzyme catalyses betaine aldehyde + NAD(+) + H2O = glycine betaine + NADH + 2 H(+). It functions in the pathway amine and polyamine biosynthesis; betaine biosynthesis via choline pathway; betaine from betaine aldehyde: step 1/1. Activity is stimulated by low concentrations of salts and by moderate concentrations of glycine betaine. Highly tolerant to high ionic conditions. In vitro, activity is highly stimulated in the presence of proline. Functionally, involved in the biosynthesis of the osmoprotectant glycine betaine from choline. Catalyzes the oxidation of betaine aldehyde to betaine. Shows specificity for betaine aldehyde as substrate. Can use both NAD(+) and NADP(+), but NAD(+) is strongly preferred. The protein is Betaine aldehyde dehydrogenase of Bacillus subtilis (strain 168).